Consider the following 548-residue polypeptide: Membrane protein insertase YidC (548 aa).

Residues 6-26 traverse the membrane as a helical segment; the sequence is NLLVIALLFVSFMIWQAWEQD. Positions 28–56 are disordered; the sequence is NPQPQTQQTTQTTTTAAGSAADQGVPASG. Low complexity predominate over residues 29–42; sequence PQPQTQQTTQTTTT. Helical transmembrane passes span 350 to 370, 424 to 444, 458 to 478, and 499 to 519; these read FVGN…GIMY, FPLI…MGSI, LSAQ…MFFI, and PVIF…YYIV.

This sequence belongs to the OXA1/ALB3/YidC family. Type 1 subfamily. Interacts with the Sec translocase complex via SecD. Specifically interacts with transmembrane segments of nascent integral membrane proteins during membrane integration.

The protein localises to the cell inner membrane. In terms of biological role, required for the insertion and/or proper folding and/or complex formation of integral membrane proteins into the membrane. Involved in integration of membrane proteins that insert both dependently and independently of the Sec translocase complex, as well as at least some lipoproteins. Aids folding of multispanning membrane proteins. The protein is Membrane protein insertase YidC of Salmonella paratyphi C (strain RKS4594).